The following is an 88-amino-acid chain: Pigment dispersing factor homolog pdf-1 (88 aa).

The N-terminal stretch at 1-21 (MNRFIISMIALLAVFCAVSTA) is a signal peptide.

It localises to the secreted. Its function is as follows. Probable ligand of isoforms a and b of the calcitonin receptor-like protein, pdfr-1, a G-protein coupled receptor. May not signal through isoform c of pdfr-1. Involved in locomotion; more specifically mate searching behavior of males, independent of nutritional status. Involved in regulating the male-specific expression of TGFbeta-like daf-7 in the ASJ chemosensory neurons. Plays a role in circadian rhythms of locomotor activity. Involved in mediating arousal from the sleep-like state called lethargus, which occurs during molting between larval and adult stages, in part by regulating touch sensitivity, and working in concert with neuropeptide flp-2. In the presence of food, plays a role in initiating and extending exploratory roaming behavior, in opposition to 5-hydroxytryptamine (serotonin) signaling. This Caenorhabditis elegans protein is Pigment dispersing factor homolog pdf-1.